A 147-amino-acid chain; its full sequence is Pathogenesis-related protein PR-4B (147 aa).

The signal sequence occupies residues 1–25; the sequence is MERVNNYKLCVALLIMSVMMAMAAA. A Barwin domain is found at 26-147; it reads QSATNVRSTY…VNYEFVNCND (122 aa). Disulfide bonds link C54–C86, C75–C109, and C89–C145.

The protein localises to the secreted. Its subcellular location is the cell wall. In Nicotiana tabacum (Common tobacco), this protein is Pathogenesis-related protein PR-4B.